Consider the following 25-residue polypeptide: Ribosome-inactivating protein velutin (25 aa).

A disordered region spans residues 1–25; sequence XHPDLFXXRPDNTASPKFEDPRLNP.

The protein belongs to the ribosome-inactivating protein family.

It carries out the reaction Endohydrolysis of the N-glycosidic bond at one specific adenosine on the 28S rRNA.. In terms of biological role, inhibits protein synthesis but does not possess ribonuclease activity. Also inhibits HIV-1 reverse transcriptase, beta-glucosidase and beta-glucuronidase. This is Ribosome-inactivating protein velutin from Flammulina velutipes (Agaricus velutipes).